The following is an 843-amino-acid chain: Neuroligin-1 (843 aa).

The signal sequence occupies residues 1-45 (MALPRCMWPNYVWRAMMACVVHRGSGAPLTLCLLGCLLQTFHVLS). Over 46-697 (QKLDDVDPLV…DQRDYSTELS (652 aa)) the chain is Extracellular. N109 carries N-linked (GlcNAc...) (complex) asparagine glycosylation. Cystine bridges form between C117-C153 and C172-C181. N-linked (GlcNAc...) (complex) asparagine glycans are attached at residues N303 and N343. Disulfide bonds link C342-C353 and C512-C546. The N-linked (GlcNAc...) asparagine glycan is linked to N547. A disordered region spans residues 647–688 (TKVPSTDITLRPTRKNSTPVTSAFPTAKQDDPKQQPSPFSVD). A compositionally biased stretch (polar residues) spans 661–670 (KNSTPVTSAF). S683 and S686 each carry an O-linked (GalNAc...) serine glycan. The helical transmembrane segment at 698–718 (VTIAVGASLLFLNILAFAALY) threads the bilayer. Over 719-843 (YKKDKRRHDV…HPHSHSTTRV (125 aa)) the chain is Cytoplasmic. The segment at 822-843 (GGQNNTLPHPHPHPHSHSTTRV) is disordered. The segment covering 831 to 843 (PHPHPHSHSTTRV) has biased composition (basic residues).

Belongs to the type-B carboxylesterase/lipase family. In terms of assembly, interacts with neurexins NRXN1, NRXN2 and NRXN3. Interaction with neurexins is mediated by heparan sulfate glycan modification on neurexin. Interacts with NLGN3. Interacts (via its C-terminus) with DLG4/PSD-95 (via PDZ domain 3). Interacts with GOPC. Interacts with AIP1 and PDZRN3. Post-translationally, the N-terminus is blocked. Expressed in brain, almost exclusively in neurons, and spinal cord. Detected in pancreas islet beta cells.

The protein resides in the cell membrane. Its subcellular location is the postsynaptic density. The protein localises to the synaptic cleft. It is found in the synaptic cell membrane. Functionally, cell surface protein involved in cell-cell-interactions via its interactions with neurexin family members. Plays a role in synapse function and synaptic signal transmission, and probably mediates its effects by recruiting and clustering other synaptic proteins. May promote the initial formation of synapses, but is not essential for this. In vitro, triggers the de novo formation of presynaptic structures. May be involved in specification of excitatory synapses. Required to maintain wakefulness quality and normal synchrony of cerebral cortex activity during wakefulness and sleep. The protein is involved in nervous system development. This chain is Neuroligin-1 (Nlgn1), found in Rattus norvegicus (Rat).